The following is a 128-amino-acid chain: MRFAIVVTGPAYGTQQASSAFQFAQALIAEGHELSSVFFYREGVYNANQLTSPASDEFDLVRGWQQLNTQHGVALNICVAAALRRGVVDETEAGRLGLASSNLQTGFTLSGLGALAEASLTCDRVVQF.

Catalysis depends on cysteine 78, which acts as the Cysteine persulfide intermediate.

This sequence belongs to the DsrE/TusD family. In terms of assembly, heterohexamer, formed by a dimer of trimers. The hexameric TusBCD complex contains 2 copies each of TusB, TusC and TusD. The TusBCD complex interacts with TusE.

The protein resides in the cytoplasm. Its function is as follows. Part of a sulfur-relay system required for 2-thiolation of 5-methylaminomethyl-2-thiouridine (mnm(5)s(2)U) at tRNA wobble positions. Accepts sulfur from TusA and transfers it in turn to TusE. This Escherichia fergusonii (strain ATCC 35469 / DSM 13698 / CCUG 18766 / IAM 14443 / JCM 21226 / LMG 7866 / NBRC 102419 / NCTC 12128 / CDC 0568-73) protein is Sulfurtransferase TusD.